We begin with the raw amino-acid sequence, 263 residues long: GTP cyclohydrolase 1 type 2 homolog (263 aa).

A divalent metal cation-binding residues include His65, His66, Asp104, His225, and Glu229.

It belongs to the GTP cyclohydrolase I type 2/NIF3 family. In terms of assembly, homohexamer.

The sequence is that of GTP cyclohydrolase 1 type 2 homolog from Nostoc sp. (strain PCC 7120 / SAG 25.82 / UTEX 2576).